Here is a 663-residue protein sequence, read N- to C-terminus: Probable serine/threonine-protein kinase DDB_G0283301 (663 aa).

In terms of domain architecture, Protein kinase spans 312–586 (IERRNELGRG…EECVERLITL (275 aa)). ATP-binding positions include 318–326 (LGRGGNGTV) and K348. D440 functions as the Proton acceptor in the catalytic mechanism.

It belongs to the protein kinase superfamily. Ser/Thr protein kinase family.

The enzyme catalyses L-seryl-[protein] + ATP = O-phospho-L-seryl-[protein] + ADP + H(+). It catalyses the reaction L-threonyl-[protein] + ATP = O-phospho-L-threonyl-[protein] + ADP + H(+). The sequence is that of Probable serine/threonine-protein kinase DDB_G0283301 from Dictyostelium discoideum (Social amoeba).